Consider the following 435-residue polypeptide: Glutamyl-tRNA reductase (435 aa).

Residues 49-52 (TCNR), Ser-109, 114-116 (ETQ), and Gln-120 contribute to the substrate site. Residue Cys-50 is the Nucleophile of the active site. 189-194 (GAGEMS) is a binding site for NADP(+).

The protein belongs to the glutamyl-tRNA reductase family. Homodimer.

The enzyme catalyses (S)-4-amino-5-oxopentanoate + tRNA(Glu) + NADP(+) = L-glutamyl-tRNA(Glu) + NADPH + H(+). The protein operates within porphyrin-containing compound metabolism; protoporphyrin-IX biosynthesis; 5-aminolevulinate from L-glutamyl-tRNA(Glu): step 1/2. Its function is as follows. Catalyzes the NADPH-dependent reduction of glutamyl-tRNA(Glu) to glutamate 1-semialdehyde (GSA). The polypeptide is Glutamyl-tRNA reductase (Listeria innocua serovar 6a (strain ATCC BAA-680 / CLIP 11262)).